We begin with the raw amino-acid sequence, 357 residues long: DNA replication and repair protein RecF (357 aa).

30 to 37 is a binding site for ATP; sequence GANGSGKT.

It belongs to the RecF family.

Its subcellular location is the cytoplasm. Its function is as follows. The RecF protein is involved in DNA metabolism; it is required for DNA replication and normal SOS inducibility. RecF binds preferentially to single-stranded, linear DNA. It also seems to bind ATP. This Escherichia fergusonii (strain ATCC 35469 / DSM 13698 / CCUG 18766 / IAM 14443 / JCM 21226 / LMG 7866 / NBRC 102419 / NCTC 12128 / CDC 0568-73) protein is DNA replication and repair protein RecF.